The chain runs to 218 residues: Probable transaldolase (218 aa).

Catalysis depends on Lys83, which acts as the Schiff-base intermediate with substrate.

This sequence belongs to the transaldolase family. Type 3B subfamily.

It is found in the cytoplasm. The enzyme catalyses D-sedoheptulose 7-phosphate + D-glyceraldehyde 3-phosphate = D-erythrose 4-phosphate + beta-D-fructose 6-phosphate. Its pathway is carbohydrate degradation; pentose phosphate pathway; D-glyceraldehyde 3-phosphate and beta-D-fructose 6-phosphate from D-ribose 5-phosphate and D-xylulose 5-phosphate (non-oxidative stage): step 2/3. Transaldolase is important for the balance of metabolites in the pentose-phosphate pathway. In Thermotoga petrophila (strain ATCC BAA-488 / DSM 13995 / JCM 10881 / RKU-1), this protein is Probable transaldolase.